A 127-amino-acid chain; its full sequence is Prophage antitermination protein Q homolog QuuD (127 aa).

Belongs to the phage antitermination Q type 1 family.

Its function is as follows. Positively regulate expression of some phage genes. Bacterial host RNA polymerase modified by antitermination proteins transcribes through termination sites that otherwise prevent expression of the regulated genes. This chain is Prophage antitermination protein Q homolog QuuD (quuD), found in Escherichia coli (strain K12).